Here is a 708-residue protein sequence, read N- to C-terminus: Nicastrin (708 aa).

The N-terminal stretch at 1–34 is a signal peptide; the sequence is MATARGGSGPDPGSRGLLLLSFSVVLAGLCGGNS. The Lumenal segment spans residues 35–668; sequence VERKIYIPLN…IFLIASKELE (634 aa). N-linked (GlcNAc...) asparagine glycosylation is found at Asn44, Asn54, and Asn128. Cys49 and Cys61 are oxidised to a cystine. Residues Cys139 and Cys158 are joined by a disulfide bond. N-linked (GlcNAc...) asparagine glycosylation is found at Asn186 and Asn203. Intrachain disulfides connect Cys194/Cys212 and Cys229/Cys247. 11 N-linked (GlcNAc...) asparagine glycosylation sites follow: Asn263, Asn386, Asn434, Asn463, Asn507, Asn529, Asn561, Asn572, Asn579, Asn593, and Asn611. Cys585 and Cys619 are disulfide-bonded. The chain crosses the membrane as a helical span at residues 669 to 689; it reads FITLIVGFSILVFSLIVTYCI. Topologically, residues 690 to 708 are cytoplasmic; the sequence is NAKADVLFVAPREPGAVSY.

The protein belongs to the nicastrin family. In terms of assembly, component of the gamma-secretase complex. The functional gamma-secretase complex is composed of at least four polypeptides: a presenilin homodimer (PSEN1 or PSEN2), nicastrin (NCSTN), APH1 (APH1A or APH1B) and PEN2. Binds to proteolytic processed C-terminal fragments C83 and C99 of the amyloid precursor protein (APP). Interacts with PSEN1 and PSEN2. Post-translationally, N-glycosylated.

Its subcellular location is the membrane. It is found in the cytoplasmic vesicle membrane. The protein localises to the melanosome. Functionally, essential subunit of the gamma-secretase complex, an endoprotease complex that catalyzes the intramembrane cleavage of integral membrane proteins such as Notch receptors and APP (amyloid-beta precursor protein). The gamma-secretase complex plays a role in Notch and Wnt signaling cascades and regulation of downstream processes via its role in processing key regulatory proteins, and by regulating cytosolic CTNNB1 levels. This chain is Nicastrin (Ncstn), found in Rattus norvegicus (Rat).